The following is a 297-amino-acid chain: Taste receptor type 2 member 4 (297 aa).

Over 1–11 the chain is Extracellular; the sequence is MLWELYVFVFA. The chain crosses the membrane as a helical span at residues 12 to 32; it reads ASVFLNFVGIIANLFIIVIII. Over 33–46 the chain is Cytoplasmic; sequence KTWVNSRRIASPDR. The helical transmembrane segment at 47–67 threads the bilayer; it reads ILFSLAITRFLTLGLFLLNSV. Over 68 to 80 the chain is Extracellular; sequence YIATNTGRSVYFS. Residues 81–101 traverse the membrane as a helical segment; sequence TFFLLCWKFLDANSLWLVTIL. At 102 to 128 the chain is on the cytoplasmic side; it reads NSLYCVKITNFQHPVFLLLKRTISMKT. The chain crosses the membrane as a helical span at residues 129–149; sequence TSLLLACLLISALTTLLYYML. Residues 150–171 lie on the Extracellular side of the membrane; that stretch reads SQISRFPEHIIGRNDTSFDLSD. Asn-163 is a glycosylation site (N-linked (GlcNAc...) asparagine). Residues 172 to 192 form a helical membrane-spanning segment; it reads GILTLVASLVLNSLLQFMLNV. Residues 193-229 lie on the Cytoplasmic side of the membrane; it reads TFASLLIHSLRRHIQKMQRNRTSFWNPQTEAHMGAMR. A helical transmembrane segment spans residues 230-250; it reads LMICFLVLYIPYSIATLLYLP. Residues 251 to 260 are Extracellular-facing; sequence SYMRKNLRAQ. Residues 261–281 traverse the membrane as a helical segment; the sequence is AICMIITAAYPPGHSVLLIIT. Residues 282–297 are Cytoplasmic-facing; sequence HHKLKAKAKKIFCFYK.

It belongs to the G-protein coupled receptor T2R family. Expressed in subsets of taste receptor cells of the tongue and palate epithelium and exclusively in gustducin-positive cells. Expressed in 15% taste bud cells in circumvallate and foliate papillae but only in 2% in fungiform papillae.

The protein resides in the membrane. Its subcellular location is the cell projection. It localises to the cilium membrane. In terms of biological role, gustducin-coupled receptor for denatonium and N(6)-propyl-2-thiouracil implicated in the perception of bitter compounds in the oral cavity and the gastrointestinal tract. Signals through PLCB2 and the calcium-regulated cation channel TRPM5. In airway epithelial cells, binding of denatonium increases the intracellular calcium ion concentration and stimulates ciliary beat frequency. This Mus musculus (Mouse) protein is Taste receptor type 2 member 4 (Tas2r4).